The sequence spans 474 residues: Sialyltransferase-like protein 1 (474 aa).

Residues 1 to 14 (MRSHQAGRKLPLLQ) are Cytoplasmic-facing. The helical; Signal-anchor for type II membrane protein transmembrane segment at 15-35 (LLGCVAVFSVFVFTIQSSFFA) threads the bilayer. Topologically, residues 36-474 (DNNRKLDLQP…CVRHPLKLDT (439 aa)) are lumenal. 4 N-linked (GlcNAc...) asparagine glycosylation sites follow: asparagine 88, asparagine 120, asparagine 155, and asparagine 243. The disordered stretch occupies residues 376–421 (RLQRSQQPTSSKRDGSGQFGNCKVWGDADPTKGPVSGSPDMSETRK).

This sequence belongs to the glycosyltransferase 29 family. In terms of tissue distribution, highly expressed in inflorescences and siliques and at lower levels in roots, leaves and stems.

The protein localises to the golgi apparatus membrane. In terms of biological role, required for normal pollen grain germination and pollen tube growth. May not be required for pollen development and female gametophytic function. This Arabidopsis thaliana (Mouse-ear cress) protein is Sialyltransferase-like protein 1.